The sequence spans 254 residues: Wall-associated protein (254 aa).

The tract at residues 25 to 46 (DRVEPKEEPPKVPQAPKRDLKP) is disordered.

The protein localises to the secreted. It is found in the cell wall. This is Wall-associated protein (wapA') from Geobacillus stearothermophilus (Bacillus stearothermophilus).